The primary structure comprises 1515 residues: Homeobox protein cut-like 1 (1515 aa).

A coiled-coil region spans residues 56–361 (LLKSFQGEID…VKKELNTLKS (306 aa)). The span at 393–405 (ENATLRISNSDLS) shows a compositional bias: polar residues. Disordered regions lie at residues 393-453 (ENAT…SPAG), 509-546 (PYST…ISEG), 644-666 (PKRR…TGSD), and 680-702 (LQVQ…NSDD). The span at 422 to 432 (GPLPASPPPQL) shows a compositional bias: pro residues. S427 carries the post-translational modification Phosphoserine. The segment covering 436 to 447 (TGEQVSNTNGTH) has biased composition (polar residues). Residues 514 to 544 (SISSPSPLQQSPDVNGMAPSPSQSESAGSIS) are compositionally biased toward low complexity. Positions 540–627 (AGSISEGEEI…ILALRSIQGR (88 aa)) form a DNA-binding region, CUT 1. S761 bears the Phosphoserine mark. Disordered regions lie at residues 769 to 871 (PETS…SASA) and 884 to 923 (YSQS…PSVP). Residues K783, K809, and K840 each participate in a glycyl lysine isopeptide (Lys-Gly) (interchain with G-Cter in SUMO2) cross-link. A compositionally biased stretch (basic and acidic residues) spans 828–852 (PERRNLTSSEETKADETTASGKERA). Composition is skewed to polar residues over residues 853–868 (GSSQ…QGPS) and 884–906 (YSQS…NSPL). S904 carries the post-translational modification Phosphoserine. Positions 929–1016 (QYEVYMYQEV…QGVLPVQGQQ (88 aa)) form a DNA-binding region, CUT 2. Polar residues predominate over residues 1032 to 1044 (QQGCVSSESTPKT). A disordered region spans residues 1032-1105 (QQGCVSSEST…QPTTPLPLSG (74 aa)). Residues 1045-1061 (SASCSPAPESPMSSSES) show a composition bias toward low complexity. A phosphoserine mark is found at S1054 and S1064. Positions 1112–1199 (QELVAMSPEL…VEKLMDMKRM (88 aa)) form a DNA-binding region, CUT 3. Residues 1207 to 1242 (RRHSSVSDSQPCEPPSVGIDYSQGASPQPQHQLKKP) form a disordered region. A DNA-binding region (homeobox) is located at residues 1239 to 1298 (LKKPRVVLAPEEKEALKRAYQQKPYPSPKTIEELATQLNLKTSTVINWFHNYRSRIRREL). S1265 is subject to Phosphoserine. K1279 participates in a covalent cross-link: Glycyl lysine isopeptide (Lys-Gly) (interchain with G-Cter in SUMO2). The disordered stretch occupies residues 1307–1488 (SQGQAGASDS…AGARDNPVRK (182 aa)). A compositionally biased stretch (low complexity) spans 1313–1328 (ASDSPSARSSRAAPSS). The span at 1331 to 1343 (DSCDGVEATDAEE) shows a compositional bias: acidic residues. S1332 is subject to Phosphoserine. Residues 1365–1378 (ADREEATQPAEKAK) show a composition bias toward basic and acidic residues. The span at 1406–1468 (ADAPAPVPSL…ANAPARRPSS (63 aa)) shows a compositional bias: low complexity. Phosphoserine is present on residues S1468, S1496, and S1506.

The protein belongs to the CUT homeobox family. In terms of assembly, interacts with BANP. Interacts with SATB1 (via DNA-binding domains); the interaction inhibits the attachment of both proteins to DNA. Phosphorylated by PKA. Post-translationally, as cells progress into S phase, a fraction of CUX1 molecules is proteolytically processed into N-terminally truncated proteins of 110 kDa by CTSL. Cell cycle-dependent processing of CUX1 serves to generate a CDP/Cux p110 with distinct DNA binding and transcriptional properties. In terms of tissue distribution, testis-specific where it is expressed in germ cells.

It localises to the nucleus. Transcription factor involved in the control of neuronal differentiation in the brain. Regulates dendrite development and branching, and dendritic spine formation in cortical layers II-III. Also involved in the control of synaptogenesis. In addition, it has probably a broad role in mammalian development as a repressor of developmentally regulated gene expression. May act by preventing binding of positively-activing CCAAT factors to promoters. Component of nf-munr repressor; binds to the matrix attachment regions (MARs) (5' and 3') of the immunoglobulin heavy chain enhancer. Represses T-cell receptor (TCR) beta enhancer function by binding to MARbeta, an ATC-rich DNA sequence located upstream of the TCR beta enhancer. Binds to the TH enhancer; may require the basic helix-loop-helix protein TCF4 as a coactivator. Functionally, plays a role in cell cycle progression, in particular at the G1/S transition. As cells progress into S phase, a fraction of CUX1 molecules is proteolytically processed into N-terminally truncated proteins of 110 kDa. While CUX1 only transiently binds to DNA and carries the CCAAT-displacement activity, CDP/Cux p110 makes a stable interaction with DNA and stimulates expression of genes such as POLA1. The chain is Homeobox protein cut-like 1 from Mus musculus (Mouse).